Reading from the N-terminus, the 574-residue chain is VAO-type flavoprotein oxidase VAO615 (574 aa).

An N-terminal signal peptide occupies residues 1 to 17 (MPASLLRFLALAGTAVG). Disulfide bonds link Cys28-Cys572, Cys64-Cys77, Cys108-Cys118, and Cys450-Cys476. N-linked (GlcNAc...) asparagine glycosylation occurs at Asn47. A glycan (N-linked (GlcNAc...) asparagine) is linked at Asn105. Residues 120-299 (LGNYPSYVVN…LSMTARLHRD (180 aa)) enclose the FAD-binding PCMH-type domain. Residues Asn129, Asn211, Asn310, Asn346, and Asn438 are each glycosylated (N-linked (GlcNAc...) asparagine). The 6-(S-cysteinyl)-8alpha-(pros-histidyl)-FAD (His-Cys) cross-link spans 157–222 (HDYLGKSTGK…TGHRIVGGTC (66 aa)).

It belongs to the oxygen-dependent FAD-linked oxidoreductase family. FAD is required as a cofactor. The FAD cofactor is bound via a bicovalent 6-S-cysteinyl, 8alpha-N1-histidyl FAD linkage.

The protein resides in the secreted. Probably oxidoreductase that, when reduced, rapidly reacts with molecular oxygen, a hallmark of flavoprotein oxidases. A large panel of alcohols, including carbohydrates, steroids and secondary alcohols were tested as potential substrates, but none has been identified so far. This is VAO-type flavoprotein oxidase VAO615 from Thermothelomyces thermophilus (strain ATCC 42464 / BCRC 31852 / DSM 1799) (Sporotrichum thermophile).